We begin with the raw amino-acid sequence, 211 residues long: tRNA (guanine-N(7)-)-methyltransferase (211 aa).

Positions 44, 69, 96, and 118 each coordinate S-adenosyl-L-methionine. Residue aspartate 118 is part of the active site. Lysine 122 contacts substrate. The interval 124 to 129 is interaction with RNA; the sequence is KHEKRR. Substrate contacts are provided by residues aspartate 154 and 191–194; that span reads TEYE.

It belongs to the class I-like SAM-binding methyltransferase superfamily. TrmB family.

It carries out the reaction guanosine(46) in tRNA + S-adenosyl-L-methionine = N(7)-methylguanosine(46) in tRNA + S-adenosyl-L-homocysteine. Its pathway is tRNA modification; N(7)-methylguanine-tRNA biosynthesis. In terms of biological role, catalyzes the formation of N(7)-methylguanine at position 46 (m7G46) in tRNA. This chain is tRNA (guanine-N(7)-)-methyltransferase, found in Streptococcus pyogenes serotype M18 (strain MGAS8232).